The sequence spans 176 residues: Ribosome rescue factor SmrB (176 aa).

A Smr domain is found at 97 to 172 (LDMHGMTQQE…GNGALLVLID (76 aa)).

The protein belongs to the SmrB family. Associates with collided ribosomes, but not with correctly translating polysomes.

Acts as a ribosome collision sensor. Detects stalled/collided disomes (pairs of ribosomes where the leading ribosome is stalled and a second ribosome has collided with it) and endonucleolytically cleaves mRNA at the 5' boundary of the stalled ribosome. Stalled/collided disomes form a new interface (primarily via the 30S subunits) that binds SmrB. Cleaved mRNA becomes available for tmRNA ligation, leading to ribosomal subunit dissociation and rescue of stalled ribosomes. This is Ribosome rescue factor SmrB from Photobacterium profundum (strain SS9).